The chain runs to 443 residues: ATP-dependent protease ATPase subunit HslU (443 aa).

Residues Ile18 and 60–65 (GVGKTE) contribute to the ATP site. The tract at residues 139-158 (AKNNWGQNETPAEPSSARQS) is disordered. Asp256, Glu321, and Arg393 together coordinate ATP.

It belongs to the ClpX chaperone family. HslU subfamily. In terms of assembly, a double ring-shaped homohexamer of HslV is capped on each side by a ring-shaped HslU homohexamer. The assembly of the HslU/HslV complex is dependent on binding of ATP.

It is found in the cytoplasm. In terms of biological role, ATPase subunit of a proteasome-like degradation complex; this subunit has chaperone activity. The binding of ATP and its subsequent hydrolysis by HslU are essential for unfolding of protein substrates subsequently hydrolyzed by HslV. HslU recognizes the N-terminal part of its protein substrates and unfolds these before they are guided to HslV for hydrolysis. This Erwinia tasmaniensis (strain DSM 17950 / CFBP 7177 / CIP 109463 / NCPPB 4357 / Et1/99) protein is ATP-dependent protease ATPase subunit HslU.